The following is a 412-amino-acid chain: Isocitrate dehydrogenase [NADP] cytoplasmic (412 aa).

NADP(+) contacts are provided by residues T75–T77 and R82. T77 provides a ligand contact to substrate. Residues S94–R100, R109, and R132 contribute to the substrate site. D252 is a Mn(2+) binding site. An NADP(+)-binding site is contributed by K260. A Mn(2+)-binding site is contributed by D275. NADP(+) contacts are provided by residues G310 to H315 and N328.

This sequence belongs to the isocitrate and isopropylmalate dehydrogenases family. In terms of assembly, homodimer. The cofactor is Mg(2+). Mn(2+) serves as cofactor. The N-terminus is blocked.

It localises to the cytoplasm. The enzyme catalyses D-threo-isocitrate + NADP(+) = 2-oxoglutarate + CO2 + NADPH. Its activity is regulated as follows. By catabolite repression. May function in the production of NADPH for fatty acid and sterol synthesis. The chain is Isocitrate dehydrogenase [NADP] cytoplasmic (IDP2) from Saccharomyces cerevisiae (strain ATCC 204508 / S288c) (Baker's yeast).